A 257-amino-acid chain; its full sequence is AA9 family lytic polysaccharide monooxygenase U (257 aa).

An N-terminal signal peptide occupies residues 1–19 (MKLYLAAFLGAVATPGAFA). Histidine 20 contributes to the Cu(2+) binding site. 2 N-linked (GlcNAc...) asparagine glycosylation sites follow: asparagine 29 and asparagine 71. Cysteine 74 and cysteine 194 form a disulfide bridge. Position 113 (histidine 113) interacts with Cu(2+). Asparagine 161 carries an N-linked (GlcNAc...) asparagine glycan. Residue glutamine 189 participates in O2 binding. Tyrosine 191 serves as a coordination point for Cu(2+).

This sequence belongs to the polysaccharide monooxygenase AA9 family. Cu(2+) is required as a cofactor.

It is found in the secreted. The catalysed reaction is [(1-&gt;4)-beta-D-glucosyl]n+m + reduced acceptor + O2 = 4-dehydro-beta-D-glucosyl-[(1-&gt;4)-beta-D-glucosyl]n-1 + [(1-&gt;4)-beta-D-glucosyl]m + acceptor + H2O.. Its function is as follows. Lytic polysaccharide monooxygenase (LPMO) that depolymerizes crystalline and amorphous polysaccharides via the oxidation of scissile alpha- or beta-(1-4)-glycosidic bonds, yielding C1 and C4 oxidation products. Catalysis by LPMOs requires the reduction of the active-site copper from Cu(II) to Cu(I) by a reducing agent and H(2)O(2) or O(2) as a cosubstrate. Shows no activity on wheat arabinoxylan, konjac glucomannan, acetylated spruce galactoglucomannan, or cellopentaose. The sequence is that of AA9 family lytic polysaccharide monooxygenase U from Thermothielavioides terrestris (strain ATCC 38088 / NRRL 8126) (Thielavia terrestris).